The following is a 348-amino-acid chain: Protein RecA (348 aa).

Residue Gly65–Thr72 coordinates ATP.

The protein belongs to the RecA family.

The protein resides in the cytoplasm. Can catalyze the hydrolysis of ATP in the presence of single-stranded DNA, the ATP-dependent uptake of single-stranded DNA by duplex DNA, and the ATP-dependent hybridization of homologous single-stranded DNAs. It interacts with LexA causing its activation and leading to its autocatalytic cleavage. This chain is Protein RecA, found in Vibrio anguillarum (strain ATCC 68554 / 775) (Listonella anguillarum).